We begin with the raw amino-acid sequence, 277 residues long: Uridine phosphorylase (277 aa).

Belongs to the PNP/UDP phosphorylase family.

Its subcellular location is the cytoplasm. The catalysed reaction is uridine + phosphate = alpha-D-ribose 1-phosphate + uracil. It functions in the pathway pyrimidine metabolism; UMP biosynthesis via salvage pathway; uracil from uridine (phosphorylase route): step 1/1. Functionally, catalyzes the reversible phosphorylytic cleavage of uridine to uracil and ribose-1-phosphate. This is Uridine phosphorylase from Thermococcus kodakarensis (strain ATCC BAA-918 / JCM 12380 / KOD1) (Pyrococcus kodakaraensis (strain KOD1)).